The following is a 351-amino-acid chain: Methylthioribose-1-phosphate isomerase (351 aa).

Substrate is bound by residues 51 to 53 (RGA), Arg-94, and Gln-199. Catalysis depends on Asp-240, which acts as the Proton donor. Substrate is bound at residue 250–251 (NK).

This sequence belongs to the EIF-2B alpha/beta/delta subunits family. MtnA subfamily. Homodimer.

The catalysed reaction is 5-(methylsulfanyl)-alpha-D-ribose 1-phosphate = 5-(methylsulfanyl)-D-ribulose 1-phosphate. Its pathway is amino-acid biosynthesis; L-methionine biosynthesis via salvage pathway; L-methionine from S-methyl-5-thio-alpha-D-ribose 1-phosphate: step 1/6. Functionally, catalyzes the interconversion of methylthioribose-1-phosphate (MTR-1-P) into methylthioribulose-1-phosphate (MTRu-1-P). This Bacillus anthracis protein is Methylthioribose-1-phosphate isomerase.